A 101-amino-acid chain; its full sequence is Small ribosomal subunit protein bS18c (101 aa).

A compositionally biased stretch (basic residues) spans 1–19; sequence MDKSKQPFRKSKRSFRRRL. A disordered region spans residues 1-26; sequence MDKSKQPFRKSKRSFRRRLPPIGSGD.

The protein belongs to the bacterial ribosomal protein bS18 family. In terms of assembly, part of the 30S ribosomal subunit.

It localises to the plastid. The protein resides in the chloroplast. The sequence is that of Small ribosomal subunit protein bS18c from Phalaenopsis aphrodite subsp. formosana (Moth orchid).